The sequence spans 367 residues: Glutamate 5-kinase (367 aa).

ATP is bound at residue Lys-8. The substrate site is built by Ser-49, Asp-136, and Asn-148. Residues 168 to 169 and 210 to 216 contribute to the ATP site; these read TD and TGGMATK. The PUA domain occupies 275 to 353; sequence TGKLLLDAGA…DQIVQILGYE (79 aa).

The protein belongs to the glutamate 5-kinase family.

It localises to the cytoplasm. The enzyme catalyses L-glutamate + ATP = L-glutamyl 5-phosphate + ADP. It functions in the pathway amino-acid biosynthesis; L-proline biosynthesis; L-glutamate 5-semialdehyde from L-glutamate: step 1/2. Catalyzes the transfer of a phosphate group to glutamate to form L-glutamate 5-phosphate. The protein is Glutamate 5-kinase of Synechococcus elongatus (strain ATCC 33912 / PCC 7942 / FACHB-805) (Anacystis nidulans R2).